Consider the following 102-residue polypeptide: Large ribosomal subunit protein bL21 (102 aa).

It belongs to the bacterial ribosomal protein bL21 family. As to quaternary structure, part of the 50S ribosomal subunit. Contacts protein L20.

Functionally, this protein binds to 23S rRNA in the presence of protein L20. This Bifidobacterium longum subsp. infantis (strain ATCC 15697 / DSM 20088 / JCM 1222 / NCTC 11817 / S12) protein is Large ribosomal subunit protein bL21.